The chain runs to 287 residues: Shikimate dehydrogenase (NADP(+)) (287 aa).

Shikimate contacts are provided by residues 20–22 and Thr-67; that span reads SRS. The active-site Proton acceptor is Lys-71. Glu-84 lines the NADP(+) pocket. Shikimate is bound by residues Asn-93 and Asp-108. NADP(+)-binding positions include 132–136, 156–161, and Met-226; these read GAGGA and NRTAAR. Tyr-228 lines the shikimate pocket. An NADP(+)-binding site is contributed by Gly-250.

Belongs to the shikimate dehydrogenase family. In terms of assembly, homodimer.

The enzyme catalyses shikimate + NADP(+) = 3-dehydroshikimate + NADPH + H(+). The protein operates within metabolic intermediate biosynthesis; chorismate biosynthesis; chorismate from D-erythrose 4-phosphate and phosphoenolpyruvate: step 4/7. Its function is as follows. Involved in the biosynthesis of the chorismate, which leads to the biosynthesis of aromatic amino acids. Catalyzes the reversible NADPH linked reduction of 3-dehydroshikimate (DHSA) to yield shikimate (SA). This chain is Shikimate dehydrogenase (NADP(+)), found in Bordetella bronchiseptica (strain ATCC BAA-588 / NCTC 13252 / RB50) (Alcaligenes bronchisepticus).